The following is a 351-amino-acid chain: Ribosomal RNA small subunit methyltransferase H (351 aa).

S-adenosyl-L-methionine contacts are provided by residues 48 to 50 (GGY), aspartate 67, phenylalanine 94, aspartate 115, and glutamine 122. Residues 274 to 351 (AAQASRHVPG…PAPQGRGPRR (78 aa)) are disordered.

This sequence belongs to the methyltransferase superfamily. RsmH family.

It is found in the cytoplasm. It catalyses the reaction cytidine(1402) in 16S rRNA + S-adenosyl-L-methionine = N(4)-methylcytidine(1402) in 16S rRNA + S-adenosyl-L-homocysteine + H(+). Specifically methylates the N4 position of cytidine in position 1402 (C1402) of 16S rRNA. The protein is Ribosomal RNA small subunit methyltransferase H of Methylorubrum extorquens (strain PA1) (Methylobacterium extorquens).